Consider the following 89-residue polypeptide: Small ribosomal subunit protein bS20 (89 aa).

The protein belongs to the bacterial ribosomal protein bS20 family.

Its function is as follows. Binds directly to 16S ribosomal RNA. This chain is Small ribosomal subunit protein bS20, found in Helicobacter pylori (strain P12).